A 267-amino-acid chain; its full sequence is Hemin import ATP-binding protein HmuV (267 aa).

The 241-residue stretch at 3-243 folds into the ABC transporter domain; the sequence is LEVRGIEVWR…ELVARVFGLR (241 aa). An ATP-binding site is contributed by 35 to 42; it reads GPNGAGKS.

Belongs to the ABC transporter superfamily. Heme (hemin) importer (TC 3.A.1.14.5) family. In terms of assembly, the complex is composed of two ATP-binding proteins (HmuV), two transmembrane proteins (HmuU) and a solute-binding protein (HmuT).

The protein resides in the cell inner membrane. Part of the ABC transporter complex HmuTUV involved in hemin import. Responsible for energy coupling to the transport system. This chain is Hemin import ATP-binding protein HmuV, found in Myxococcus xanthus (strain DK1622).